A 146-amino-acid polypeptide reads, in one-letter code: D-aminoacyl-tRNA deacylase (146 aa).

Residues 138–139 (GP) carry the Gly-cisPro motif, important for rejection of L-amino acids motif.

It belongs to the DTD family. As to quaternary structure, homodimer.

Its subcellular location is the cytoplasm. The catalysed reaction is glycyl-tRNA(Ala) + H2O = tRNA(Ala) + glycine + H(+). The enzyme catalyses a D-aminoacyl-tRNA + H2O = a tRNA + a D-alpha-amino acid + H(+). An aminoacyl-tRNA editing enzyme that deacylates mischarged D-aminoacyl-tRNAs. Also deacylates mischarged glycyl-tRNA(Ala), protecting cells against glycine mischarging by AlaRS. Acts via tRNA-based rather than protein-based catalysis; rejects L-amino acids rather than detecting D-amino acids in the active site. By recycling D-aminoacyl-tRNA to D-amino acids and free tRNA molecules, this enzyme counteracts the toxicity associated with the formation of D-aminoacyl-tRNA entities in vivo and helps enforce protein L-homochirality. This Tolumonas auensis (strain DSM 9187 / NBRC 110442 / TA 4) protein is D-aminoacyl-tRNA deacylase.